The primary structure comprises 440 residues: Signal recognition particle 54 kDa protein (440 aa).

GTP is bound by residues 104–111, 184–188, and 242–245; these read GLQGSGKT, DTAGR, and TKLD.

It belongs to the GTP-binding SRP family. SRP54 subfamily. In terms of assembly, part of the signal recognition particle protein translocation system, which is composed of SRP and FtsY. Archaeal SRP consists of a 7S RNA molecule of 300 nucleotides and two protein subunits: SRP54 and SRP19.

It localises to the cytoplasm. It catalyses the reaction GTP + H2O = GDP + phosphate + H(+). Its function is as follows. Involved in targeting and insertion of nascent membrane proteins into the cytoplasmic membrane. Binds to the hydrophobic signal sequence of the ribosome-nascent chain (RNC) as it emerges from the ribosomes. The SRP-RNC complex is then targeted to the cytoplasmic membrane where it interacts with the SRP receptor FtsY. This is Signal recognition particle 54 kDa protein from Methanosarcina acetivorans (strain ATCC 35395 / DSM 2834 / JCM 12185 / C2A).